Consider the following 368-residue polypeptide: 3-dehydroquinate synthase (368 aa).

NAD(+) contacts are provided by residues 76–81 (DGEQYK), 110–114 (GVIGD), 134–135 (TT), Lys-147, Lys-156, and 174–177 (CLKT). The Zn(2+) site is built by Glu-189, His-252, and His-269.

This sequence belongs to the sugar phosphate cyclases superfamily. Dehydroquinate synthase family. The cofactor is NAD(+). Co(2+) is required as a cofactor. Requires Zn(2+) as cofactor.

The protein localises to the cytoplasm. The enzyme catalyses 7-phospho-2-dehydro-3-deoxy-D-arabino-heptonate = 3-dehydroquinate + phosphate. It functions in the pathway metabolic intermediate biosynthesis; chorismate biosynthesis; chorismate from D-erythrose 4-phosphate and phosphoenolpyruvate: step 2/7. Its function is as follows. Catalyzes the conversion of 3-deoxy-D-arabino-heptulosonate 7-phosphate (DAHP) to dehydroquinate (DHQ). In Vibrio vulnificus (strain YJ016), this protein is 3-dehydroquinate synthase.